The sequence spans 740 residues: Probable apyrase 7 (740 aa).

Residues 1 to 113 (MVFGRITELF…PSTRRKLIRA (113 aa)) lie on the Cytoplasmic side of the membrane. The chain crosses the membrane as a helical span at residues 114-134 (VMIVMCLFLFAFLVYIVSMYI). Topologically, residues 135 to 581 (YTNWSRGASR…LKSYETLSMK (447 aa)) are extracellular. Asparagine 137 carries N-linked (GlcNAc...) asparagine glycosylation. 147-157 (VVFDCGSTGTR) contacts ATP. Asparagine 208 carries an N-linked (GlcNAc...) asparagine glycan. Glutamate 284 serves as the catalytic Proton acceptor. Residue 309–319 (GALDLGGSSLQ) participates in ATP binding. N-linked (GlcNAc...) asparagine glycosylation is found at asparagine 330, asparagine 374, asparagine 439, and asparagine 484. The helical transmembrane segment at 582–602 (INPIALISILILSLLLLLCAL) threads the bilayer. Residues 603–740 (SRVSNCLPRF…SLADSHMLKM (138 aa)) are Cytoplasmic-facing. The segment at 706–740 (FWSSPRRSQMRLQSRRSQSREDLSSSLADSHMLKM) is disordered. Residues 708–721 (SSPRRSQMRLQSRR) show a composition bias toward low complexity.

This sequence belongs to the GDA1/CD39 NTPase family. The cofactor is Ca(2+). In terms of tissue distribution, detected in mature pollen grains. Also expressed in more diverse tissues such as roots, leaves, stems, pistils and sepals. More particularly expressed in the vascular bundle.

Its subcellular location is the membrane. The catalysed reaction is a ribonucleoside 5'-triphosphate + 2 H2O = a ribonucleoside 5'-phosphate + 2 phosphate + 2 H(+). Catalyzes the hydrolysis of phosphoanhydride bonds of nucleoside tri- and di-phosphates. Involved in the regulation of pollen and anther development. The protein is Probable apyrase 7 (APY7) of Arabidopsis thaliana (Mouse-ear cress).